Consider the following 666-residue polypeptide: Probable potassium transport system protein Kup (666 aa).

The next 12 membrane-spanning stretches (helical) occupy residues 53–73, 89–109, 144–164, 181–201, 212–232, 247–267, 291–311, 324–344, 381–401, 411–431, 441–461, and 463–483; these read FWAL…TSPL, VTPV…FIVV, LLLL…SMIT, PEFG…LFAV, AFAP…ALHI, AIHF…LVFL, WFCL…ALIL, LAPA…TVIA, IYLP…VLLF, YGIA…VVVW, AAAL…ANLL, and LLDG…LIWT.

It belongs to the HAK/KUP transporter (TC 2.A.72) family.

Its subcellular location is the cell inner membrane. It catalyses the reaction K(+)(in) + H(+)(in) = K(+)(out) + H(+)(out). Functionally, transport of potassium into the cell. Likely operates as a K(+):H(+) symporter. This chain is Probable potassium transport system protein Kup, found in Nitrobacter hamburgensis (strain DSM 10229 / NCIMB 13809 / X14).